Here is a 277-residue protein sequence, read N- to C-terminus: Energy-coupling factor transporter ATP-binding protein EcfA1 (277 aa).

Positions 4-238 (IETKNLNYSY…SELLSKNDLK (235 aa)) constitute an ABC transporter domain. Position 38 to 45 (38 to 45 (GKNGSGKS)) interacts with ATP.

The protein belongs to the ABC transporter superfamily. Energy-coupling factor EcfA family. As to quaternary structure, forms a stable energy-coupling factor (ECF) transporter complex composed of 2 membrane-embedded substrate-binding proteins (S component), 2 ATP-binding proteins (A component) and 2 transmembrane proteins (T component).

Its subcellular location is the cell membrane. In terms of biological role, ATP-binding (A) component of a common energy-coupling factor (ECF) ABC-transporter complex. Unlike classic ABC transporters this ECF transporter provides the energy necessary to transport a number of different substrates. The polypeptide is Energy-coupling factor transporter ATP-binding protein EcfA1 (Oenococcus oeni (strain ATCC BAA-331 / PSU-1)).